Reading from the N-terminus, the 140-residue chain is Small ribosomal subunit protein uS19 (140 aa).

The protein belongs to the universal ribosomal protein uS19 family.

In terms of biological role, protein S19 forms a complex with S13 that binds strongly to the 16S ribosomal RNA. The chain is Small ribosomal subunit protein uS19 (rps19) from Saccharolobus solfataricus (strain ATCC 35092 / DSM 1617 / JCM 11322 / P2) (Sulfolobus solfataricus).